The primary structure comprises 477 residues: Glycogen synthase (477 aa).

Lysine 15 contributes to the ADP-alpha-D-glucose binding site.

This sequence belongs to the glycosyltransferase 1 family. Bacterial/plant glycogen synthase subfamily.

The enzyme catalyses [(1-&gt;4)-alpha-D-glucosyl](n) + ADP-alpha-D-glucose = [(1-&gt;4)-alpha-D-glucosyl](n+1) + ADP + H(+). The protein operates within glycan biosynthesis; glycogen biosynthesis. Its function is as follows. Synthesizes alpha-1,4-glucan chains using ADP-glucose. This chain is Glycogen synthase, found in Mannheimia succiniciproducens (strain KCTC 0769BP / MBEL55E).